Here is a 142-residue protein sequence, read N- to C-terminus: Large ribosomal subunit protein uL11 (142 aa).

It belongs to the universal ribosomal protein uL11 family. As to quaternary structure, part of the ribosomal stalk of the 50S ribosomal subunit. Interacts with L10 and the large rRNA to form the base of the stalk. L10 forms an elongated spine to which L12 dimers bind in a sequential fashion forming a multimeric L10(L12)X complex. In terms of processing, one or more lysine residues are methylated.

In terms of biological role, forms part of the ribosomal stalk which helps the ribosome interact with GTP-bound translation factors. The sequence is that of Large ribosomal subunit protein uL11 from Tolumonas auensis (strain DSM 9187 / NBRC 110442 / TA 4).